Consider the following 1241-residue polypeptide: RNA polymerase II C-terminal domain phosphatase-like 3 (1241 aa).

7 disordered regions span residues 361-402 (DHDA…TTEG), 428-470 (VFKT…HLIY), 505-525 (ISAP…RDPR), 578-598 (KRQK…WLED), 677-702 (AIQK…VSTP), 720-800 (VLQD…QNGT), and 852-885 (TERD…GPTR). The span at 368–378 (PSPTRETTPSL) shows a compositional bias: polar residues. Residues 441–466 (GEPNDGNGDVGGEVSSSVVKSSNPGS) show a composition bias toward low complexity. The span at 677–686 (AIQKPMDPRR) shows a compositional bias: basic and acidic residues. Composition is skewed to polar residues over residues 691 to 702 (PGSSVQPGVSTP) and 791 to 800 (PRQNISQNGT). Positions 871-881 (SVSAASVTAAA) are enriched in low complexity. One can recognise an FCP1 homology domain in the interval 923–1103 (FASQKLSLVL…GLLGPSLLEL (181 aa)). Residues 1146–1239 (EQRKILAGCR…QRANENLYAI (94 aa)) enclose the BRCT domain.

As to quaternary structure, interacts with RAP74. It depends on Mg(2+) as a cofactor. Requires Co(2+) as cofactor. Mn(2+) serves as cofactor.

It localises to the nucleus. The catalysed reaction is O-phospho-L-seryl-[protein] + H2O = L-seryl-[protein] + phosphate. It catalyses the reaction O-phospho-L-threonyl-[protein] + H2O = L-threonyl-[protein] + phosphate. Its function is as follows. Completely dephosphorylates 'Ser-2', and partially 'Ser-5' and 'Ser-7' of the heptad repeats YSPTSPS in the C-terminal domain (CTD) of the largest RNA polymerase II subunit (RPB1). Involved in defense response. Acts as a negative regulator of immune gene expression and immunity to pathogen infections. Preferentially dephosphorylates 'Ser-2' of RNA polymerase II CTD. This counterregulates the MAP kinase (MAPK) or cyclin-dependent kinase C (CDKC)-mediated phosphorylation of CTD in response to pathogens and upon perception of microbe-associated molecular patterns (MAMPs). MAPKs phosphorylate and activate CDKCs, which are CTD kinases that positively regulate plant innate immunity. Acts as a negative regulator of stress gene transcription involved in abscisic acid (ABA) mediated signaling pathway and cold resistance. Acts as a post-transcriptional gene silencing (PTGS) suppressor. This chain is RNA polymerase II C-terminal domain phosphatase-like 3, found in Arabidopsis thaliana (Mouse-ear cress).